Reading from the N-terminus, the 434-residue chain is Pancreatic lipase-related protein 2 (434 aa).

A disulfide bridge connects residues Cys-4 and Cys-10. The interval 76–88 is required for galactolipase activity; it reads IHGFTDSGENSWL. An intrachain disulfide couples Cys-92 to Cys-103. Ser-154 serves as the catalytic Nucleophile. Residue Asp-178 is the Charge relay system of the active site. Residues Glu-189, Arg-192, Asp-194, and Asp-197 each contribute to the Ca(2+) site. The cysteines at positions 239 and 245 are disulfide-linked. The tract at residues 240 to 244 is required for galactolipase activity; the sequence is KTGIS. Residue His-247 is the Charge relay system of the active site. 2 cysteine pairs are disulfide-bonded: Cys-269/Cys-280 and Cys-283/Cys-288. Residue Asn-318 is glycosylated (N-linked (GlcNAc...) asparagine). The 113-residue stretch at 322–434 folds into the PLAT domain; sequence WRYKVTVTLS…ENVEQTLSPC (113 aa). Cysteines 418 and 434 form a disulfide.

Belongs to the AB hydrolase superfamily. Lipase family. Pancreas.

The protein localises to the secreted. Its subcellular location is the zymogen granule membrane. It is found in the cell projection. It localises to the neuron projection. It carries out the reaction a triacylglycerol + H2O = a diacylglycerol + a fatty acid + H(+). The enzyme catalyses a 1,2-diacyl-3-O-(beta-D-galactosyl)-sn-glycerol + 2 H2O = 3-beta-D-galactosyl-sn-glycerol + 2 a fatty acid + 2 H(+). The catalysed reaction is 1,2,3-tri-(9Z-octadecenoyl)-glycerol + H2O = di-(9Z)-octadecenoylglycerol + (9Z)-octadecenoate + H(+). It catalyses the reaction di-(9Z)-octadecenoylglycerol + H2O = (9Z-octadecenoyl)-glycerol + (9Z)-octadecenoate + H(+). It carries out the reaction (9Z-octadecenoyl)-glycerol + H2O = glycerol + (9Z)-octadecenoate + H(+). The enzyme catalyses 1-(9Z-octadecenoyl)-glycerol + H2O = glycerol + (9Z)-octadecenoate + H(+). The catalysed reaction is 1,2,3-tripropanoylglycerol + H2O = dipropanoylglycerol + propanoate + H(+). It catalyses the reaction 1,2,3-tributanoylglycerol + H2O = dibutanoylglycerol + butanoate + H(+). It carries out the reaction 1,2,3-trioctanoylglycerol + H2O = dioctanoylglycerol + octanoate + H(+). The enzyme catalyses 1,2-didecanoylglycerol + H2O = decanoylglycerol + decanoate + H(+). The catalysed reaction is long chain 1,2-diacyl-3-O-beta-D-galactosyl-sn-glycerol + H2O = long chain acyl-3-O-beta-D-galactosyl-sn-glycerol + a fatty acid + H(+). It catalyses the reaction 1,2-dioctanoyl-3-O-beta-D-galactosyl-sn-glycerol + H2O = octanoyl-3-(beta-D-galactosyl)-sn-glycerol + octanoate + H(+). It carries out the reaction 1,2-didodecanoyl-3-beta-D-galactosyl-sn-glycerol + H2O = dodecanoyl-3-beta-D-galactosyl-sn-glycerol + dodecanoate + H(+). The enzyme catalyses 1-beta-D-galactosyl-2,3-didodecanoyl-sn-glycerol + H2O = 1-beta-D-galactosyl-dodecanoyl-sn-glycerol + dodecanoate + H(+). The catalysed reaction is a 1,2-diacyl-3-O-[alpha-D-galactosyl-(1-&gt;6)-beta-D-galactosyl]-sn-glycerol + H2O = acyl-3-O-[alpha-D-galactosyl-(1-&gt;6)-beta-D-galactosyl]-sn-glycerol + a fatty acid + H(+). It catalyses the reaction long chain 1,2-diacyl-3-O-[alpha-D-galactosyl-(1-&gt;6)-beta-D-galactosyl]-sn-glycerol + H2O = long chain acyl-3-O-[alpha-D-galactosyl-(1-&gt;6)-beta-D-galactosyl]-sn-glycerol + a fatty acid + H(+). It carries out the reaction 1,2-dioctanoyl-3-O-[alpha-D-galactosyl-(1-&gt;6)-beta-D-galactosyl]-sn-glycerol + H2O = octanoyl-3-O-[alpha-D-galactosyl-(1-&gt;6)-beta-D-galactosyl]-sn-glycerol + octanoate + H(+). The enzyme catalyses 1,2-didodecanoyl-3-O-[alpha-D-galactosyl-(1-&gt;6)-beta-D-galactosyl]-sn-glycerol + H2O = dodecanoyl-3-O-[alpha-D-galactosyl-(1-&gt;6)-beta-D-galactosyl]-sn-glycerol + dodecanoate + H(+). The catalysed reaction is a 1,2-diacyl-sn-glycero-3-phosphocholine + H2O = a monoacyl-sn-glycero-3-phosphocholine + a fatty acid + H(+). It functions in the pathway glycerolipid metabolism; triacylglycerol degradation. It participates in glycolipid metabolism. With respect to regulation, CLPS stimulates triacylglycerol lipase activity. Not inhibited by bile salts. Its function is as follows. Lipase that primarily hydrolyzes triglycerides and galactosylglycerides. In neonates, may play a major role in pancreatic digestion of dietary fats such as milk fat globules enriched in long-chain triglycerides. Hydrolyzes short-, medium- and long-chain fatty acyls in triglycerides without apparent positional specificity. Can completely deacylate triacylglycerols. When the liver matures and bile salt synthesis increases, likely functions mainly as a galactolipase and monoacylglycerol lipase. Hydrolyzes monogalactosyldiglycerols (MGDG) and digalactosyldiacylglycerols (DGDG) present in a plant-based diet, releasing long-chain polyunsaturated fatty acids. Hydrolyzes medium- and long-chain fatty acyls in galactolipids. May act together with LIPF to hydrolyze partially digested triglycerides. Hydrolyzes long-chain monoglycerides with high efficiency. In cytotoxic T cells, contributes to perforin-dependent cell lysis, but is unlikely to mediate direct cytotoxicity. Also has low phospholipase activity. In neurons, required for the localization of the phospholipid 1-oleoyl-2-palmitoyl-PC (OPPC) to neurite tips through acyl chain remodeling of membrane phospholipids. The resulting OPPC-rich lipid membrane domain recruits the t-SNARE protein STX4 by selectively interacting with the STX4 transmembrane domain and this promotes surface expression of the dopamine transporter SLC6A3/DAT at neurite tips by facilitating fusion of SLC6A3-containing transport vesicles with the plasma membrane. The sequence is that of Pancreatic lipase-related protein 2 from Cavia porcellus (Guinea pig).